The chain runs to 845 residues: Receptor-like protein Cf-9 homolog (845 aa).

An N-terminal signal peptide occupies residues 1-19 (MGCVKLVFFMLLKLDLLEF). Positions 20–70 (KNMFTVNPNASDYCYDYTDQRMQSYPRTLFWNKSTDCCSWDGIHCDETTGQ) are N-cap. The Extracellular segment spans residues 20 to 794 (KNMFTVNPNA…EEDSPMISWQ (775 aa)). Asparagine 28, asparagine 51, and asparagine 88 each carry an N-linked (GlcNAc...) asparagine glycan. The LRR 1; degenerate repeat unit spans residues 71-94 (VVELDLRCSQLQGKFHSNSSLFQL). 25 LRR repeats span residues 95–118 (SNLK…KFGE), 119–143 (FSDL…ISHL), 144–171 (SKLH…LKNL), 172–193 (TQLR…SNFS), 194–217 (SHLT…VFHL), 219–242 (DLEF…KWNS), 244–266 (ASLM…SFSH), 267–291 (LTSL…LWNL), 292–316 (TNIE…RFEK), 318–338 (KRLS…SFNR), 340–364 (WTQL…VSGL), 365–388 (QNLG…IFSL), 390–410 (SLVV…EFKS), 411–434 (KTLS…LLNQ), 436–458 (SLQF…ICNL), 459–482 (KTLM…VGER), 484–506 (EYLL…TFSI), 507–531 (GNSF…LINC), 532–554 (KYLK…WLGY), 555–579 (LSQL…GSTN), 581–605 (FMRL…ILGN), 649–672 (LDSN…IIGD), 673–696 (LVGL…SFQN), 698–721 (SVLE…LASL), and 723–741 (FLEV…IPKG). Residues asparagine 131, asparagine 170, asparagine 183, and asparagine 191 are each glycosylated (N-linked (GlcNAc...) asparagine). Asparagine 241 carries N-linked (GlcNAc...) asparagine glycosylation. Asparagine 279 and asparagine 290 each carry an N-linked (GlcNAc...) asparagine glycan. Asparagine 337, asparagine 360, asparagine 378, and asparagine 398 each carry an N-linked (GlcNAc...) asparagine glycan. A glycan (N-linked (GlcNAc...) asparagine) is linked at asparagine 446. Asparagine 501 carries an N-linked (GlcNAc...) asparagine glycan. N-linked (GlcNAc...) asparagine glycosylation is present at asparagine 545. 3 N-linked (GlcNAc...) asparagine glycosylation sites follow: asparagine 656, asparagine 680, and asparagine 696. N-linked (GlcNAc...) asparagine glycosylation is found at asparagine 728 and asparagine 749. Residues 742–794 (KQFDSFGNTSYQGNDGLRGFPLSKLCGVDDQVTTPAELDQEEEEEDSPMISWQ) are C-cap/acidic domain. The chain crosses the membrane as a helical span at residues 795-815 (GVLVGYGCGLVIGLSVIYIMW). Topologically, residues 816–845 (STQYPAWFSRMDLKLEHIITTRMKKHKKRY) are cytoplasmic.

It belongs to the RLP family.

Its subcellular location is the cell membrane. At the opposite of its homolog Cf-9 found in S.pimpinellifolium, was not able to confer resistance to the fungal pathogen C.fulvum. The polypeptide is Receptor-like protein Cf-9 homolog (Solanum lycopersicum (Tomato)).